Consider the following 374-residue polypeptide: Methionine import ATP-binding protein MetN 2 (374 aa).

The disordered stretch occupies residues 1 to 22 (MSVATLQRKLPEAAPRRAGQTE). The ABC transporter domain occupies 32 to 271 (VRFIGLGKTY…PQHEVSKTLL (240 aa)). 68 to 75 (GRSGAGKS) contributes to the ATP binding site.

This sequence belongs to the ABC transporter superfamily. Methionine importer (TC 3.A.1.24) family. In terms of assembly, the complex is composed of two ATP-binding proteins (MetN), two transmembrane proteins (MetI) and a solute-binding protein (MetQ).

It localises to the cell inner membrane. It carries out the reaction L-methionine(out) + ATP + H2O = L-methionine(in) + ADP + phosphate + H(+). It catalyses the reaction D-methionine(out) + ATP + H2O = D-methionine(in) + ADP + phosphate + H(+). Part of the ABC transporter complex MetNIQ involved in methionine import. Responsible for energy coupling to the transport system. This chain is Methionine import ATP-binding protein MetN 2, found in Pseudomonas fluorescens (strain ATCC BAA-477 / NRRL B-23932 / Pf-5).